Here is a 300-residue protein sequence, read N- to C-terminus: Cation-efflux pump FieF (300 aa).

The chain crosses the membrane as a helical span at residues 24-44 (LLIKIFAWWYTGSVSILAALV). Positions 45 and 49 each coordinate Zn(2+). The next 2 helical transmembrane spans lie at 82–102 (AALA…LTGI) and 114–134 (AGVG…LVTF). The Zn(2+) site is built by histidine 153 and aspartate 157. The next 2 membrane-spanning stretches (helical) occupy residues 156 to 176 (SDVM…YGWH) and 178 to 198 (ADAL…LRMG).

It belongs to the cation diffusion facilitator (CDF) transporter (TC 2.A.4) family. FieF subfamily. As to quaternary structure, homodimer.

The protein resides in the cell inner membrane. It carries out the reaction Zn(2+)(in) + H(+)(out) = Zn(2+)(out) + H(+)(in). The enzyme catalyses Cd(2+)(in) + H(+)(out) = Cd(2+)(out) + H(+)(in). The catalysed reaction is Fe(2+)(in) + H(+)(out) = Fe(2+)(out) + H(+)(in). In terms of biological role, divalent metal cation transporter which exports Zn(2+), Cd(2+) and possibly Fe(2+). May be involved in zinc and iron detoxification by efflux. The polypeptide is Cation-efflux pump FieF (Klebsiella pneumoniae (strain 342)).